Here is a 490-residue protein sequence, read N- to C-terminus: Metal cation symporter ZIP14 (490 aa).

Residues 1 to 28 (MELLRPALPSYFLLTLLSIWTAASEARA) form the signal peptide. At 29-155 (VSTGMPTISA…PSSVEVWGYG (127 aa)) the chain is on the extracellular side. Asparagine 75, asparagine 85, and asparagine 100 each carry an N-linked (GlcNAc...) asparagine glycan. Residues 127–146 (ACSSENQENEENEQTEEGRP) form a disordered region. The chain crosses the membrane as a helical span at residues 156-176 (LLCVTVISLCSLLGASVVPFM). The Cytoplasmic segment spans residues 177 to 184 (KKTFYKRL). Residues 185-205 (LLYFIALAIGTLYSNALFQLI) form a helical membrane-spanning segment. The Extracellular segment spans residues 206-222 (PEAFGFNPMEDYYVSKS). The helical transmembrane segment at 223 to 243 (AVVFGGFYLFFFTEKILKMLL) threads the bilayer. At 244 to 395 (KQKNEHHHGH…LLNAGMSLQQ (152 aa)) the chain is on the cytoplasmic side. The HHHGHXHX-motif signature appears at 249 to 256 (HHHGHSHY). The short motif at 374 to 379 (EEFPHE) is the XEXPHE-motif element. A helical transmembrane segment spans residues 396–416 (ALFFNFLSACCCYVGLGFGIL). At 417–422 (AGSHFS) the chain is on the extracellular side. Residues 423 to 443 (ANWIFALAGGMFLYISLADMF) traverse the membrane as a helical segment. Residues 444–459 (PEMNEVSQEDERKGSA) are Cytoplasmic-facing. The helical transmembrane segment at 460-480 (LIPFVIQNLGLLTGFGIMLVL) threads the bilayer. Residues 481-490 (TMYSGHIQIG) lie on the Extracellular side of the membrane.

Belongs to the ZIP transporter (TC 2.A.5) family. As to quaternary structure, homotrimer. Post-translationally, ubiquitinated. Ubiquitination occurs upon iron depletion. The ubiquitinated form undergoes proteasomal degradation. In terms of processing, N-glycosylated. N-glycosylation at Asn-100 is required for iron-regulated extraction of the transporter from membranes and subsequent proteasomal degradation.

It is found in the cell membrane. It localises to the apical cell membrane. The protein localises to the basolateral cell membrane. Its subcellular location is the early endosome membrane. The protein resides in the late endosome membrane. It is found in the lysosome membrane. The enzyme catalyses Zn(2+)(out) + 2 hydrogencarbonate(out) = Zn(2+)(in) + 2 hydrogencarbonate(in). The catalysed reaction is Mn(2+)(out) + 2 hydrogencarbonate(out) = Mn(2+)(in) + 2 hydrogencarbonate(in). It carries out the reaction Fe(2+)(out) + 2 hydrogencarbonate(out) = Fe(2+)(in) + 2 hydrogencarbonate(in). It catalyses the reaction Cd(2+)(out) + 2 hydrogencarbonate(out) = Cd(2+)(in) + 2 hydrogencarbonate(in). Its function is as follows. Electroneutral transporter of the plasma membrane mediating the cellular uptake of the divalent metal cations zinc, manganese and iron that are important for tissue homeostasis, metabolism, development and immunity. Functions as an energy-dependent symporter, transporting through the membranes an electroneutral complex composed of a divalent metal cation and two bicarbonate anions. Beside these endogenous cellular substrates, can also import cadmium a non-essential metal which is cytotoxic and carcinogenic. This is Metal cation symporter ZIP14 from Bos taurus (Bovine).